Reading from the N-terminus, the 712-residue chain is Polyribonucleotide nucleotidyltransferase (712 aa).

Residues D487 and D493 each coordinate Mg(2+). The KH domain occupies 554–613 (PKIITMTINPDKIRDVIGPSGKQINKIIEETGVKIDIEQDGTVFISSINQEMNDKAKKII). An S1 motif domain is found at 623–691 (GEIYEGKVKR…KQGRVNLSRK (69 aa)).

This sequence belongs to the polyribonucleotide nucleotidyltransferase family. Requires Mg(2+) as cofactor.

It is found in the cytoplasm. The enzyme catalyses RNA(n+1) + phosphate = RNA(n) + a ribonucleoside 5'-diphosphate. Functionally, involved in mRNA degradation. Catalyzes the phosphorolysis of single-stranded polyribonucleotides processively in the 3'- to 5'-direction. The sequence is that of Polyribonucleotide nucleotidyltransferase from Bacillus anthracis (strain CDC 684 / NRRL 3495).